We begin with the raw amino-acid sequence, 264 residues long: 3-methyl-2-oxobutanoate hydroxymethyltransferase (264 aa).

Mg(2+) is bound by residues aspartate 45 and aspartate 84. Residues 45 to 46 (DS), aspartate 84, and lysine 112 contribute to the 3-methyl-2-oxobutanoate site. Glutamate 114 is a binding site for Mg(2+). Catalysis depends on glutamate 181, which acts as the Proton acceptor.

This sequence belongs to the PanB family. Homodecamer; pentamer of dimers. Requires Mg(2+) as cofactor.

It localises to the cytoplasm. It carries out the reaction 3-methyl-2-oxobutanoate + (6R)-5,10-methylene-5,6,7,8-tetrahydrofolate + H2O = 2-dehydropantoate + (6S)-5,6,7,8-tetrahydrofolate. Its pathway is cofactor biosynthesis; (R)-pantothenate biosynthesis; (R)-pantoate from 3-methyl-2-oxobutanoate: step 1/2. Functionally, catalyzes the reversible reaction in which hydroxymethyl group from 5,10-methylenetetrahydrofolate is transferred onto alpha-ketoisovalerate to form ketopantoate. This chain is 3-methyl-2-oxobutanoate hydroxymethyltransferase, found in Vibrio vulnificus (strain YJ016).